A 194-amino-acid polypeptide reads, in one-letter code: Fibroblast growth factor 7 (194 aa).

The signal sequence occupies residues 1–31; it reads MRKWILTWILPTLLYRSCFHIICLVGTISLA. Residue Asn45 is glycosylated (N-linked (GlcNAc...) asparagine).

The protein belongs to the heparin-binding growth factors family. In terms of assembly, interacts with FGFBP1. Interacts with FGFR2. Affinity between fibroblast growth factors (FGFs) and their receptors is increased by heparan sulfate glycosaminoglycans that function as coreceptors.

Its subcellular location is the secreted. Functionally, plays an important role in the regulation of embryonic development, cell proliferation and cell differentiation. Required for normal branching morphogenesis. Growth factor active on keratinocytes. Possible major paracrine effector of normal epithelial cell proliferation. In Canis lupus familiaris (Dog), this protein is Fibroblast growth factor 7 (FGF7).